A 1442-amino-acid chain; its full sequence is Trafficking protein particle complex subunit 10 (1442 aa).

A compositionally biased stretch (polar residues) spans 1-23 (MSNVSPNSMNLNGSTSSTASVND). 6 disordered regions span residues 1-86 (MSNV…SSSS), 251-277 (TSSGNNKDKDNDNGGGSSGTGLSTSTK), 535-564 (GSSSSNTPSSTSATTAANGKNTPMPSNSGI), 1208-1238 (LSSSTSPSSATDSSNSNGNNNNNNNNNNHSK), 1316-1335 (QQQQKESNNDNGNEKQQKQQ), and 1422-1442 (LQDNNNNNNNSINSQTSTNKT). The segment covering 39-86 (SSSSASSISNSNSSSSNNLKPSTQPLSSSSTLNTPTQFSLQHSSSSSS) has biased composition (low complexity). Residues 535 to 553 (GSSSSNTPSSTSATTAANG) are compositionally biased toward low complexity. The segment covering 554–564 (KNTPMPSNSGI) has biased composition (polar residues). A compositionally biased stretch (low complexity) spans 1208–1236 (LSSSTSPSSATDSSNSNGNNNNNNNNNNH). Low complexity predominate over residues 1425–1442 (NNNNNNNSINSQTSTNKT).

It belongs to the TMEM1 family. In terms of assembly, part of the multisubunit TRAPP (transport protein particle) complex.

It localises to the golgi apparatus. It is found in the cis-Golgi network. Functionally, may play a role in vesicular transport from endoplasmic reticulum to Golgi. This is Trafficking protein particle complex subunit 10 (trapcc10-1) from Dictyostelium discoideum (Social amoeba).